The following is a 350-amino-acid chain: GTPase Obg (350 aa).

The Obg domain occupies 1–159 (MKFIDEAKIT…WELALELKVL (159 aa)). Residues 17–43 (GDGSASFRREKYIPKGGPDGGDGGRGG) are disordered. Residues 33–43 (GPDGGDGGRGG) are compositionally biased toward gly residues. The 175-residue stretch at 160 to 334 (ADVGLLGMPN…LTYAVMDYLG (175 aa)) folds into the OBG-type G domain. Residues 166–173 (GMPNAGKS), 191–195 (FTTLA), 213–216 (DIPG), 284–287 (NKLD), and 315–317 (SAL) contribute to the GTP site. Residues Ser-173 and Thr-193 each contribute to the Mg(2+) site.

The protein belongs to the TRAFAC class OBG-HflX-like GTPase superfamily. OBG GTPase family. As to quaternary structure, monomer. Requires Mg(2+) as cofactor.

The protein resides in the cytoplasm. An essential GTPase which binds GTP, GDP and possibly (p)ppGpp with moderate affinity, with high nucleotide exchange rates and a fairly low GTP hydrolysis rate. Plays a role in control of the cell cycle, stress response, ribosome biogenesis and in those bacteria that undergo differentiation, in morphogenesis control. In Thiobacillus denitrificans (strain ATCC 25259 / T1), this protein is GTPase Obg.